The chain runs to 2351 residues: Protein FAM186A (2351 aa).

Residues 296–340 (EAEKELSLKIIRDLSNENEMLQQKLQDAEEKCEQLIRSKIVIEQL) are a coiled coil. Disordered stretches follow at residues 412–460 (ERTP…SWKR), 470–489 (ETSGPNLSDNKSGQKVSEAK), 505–538 (EMKSFSEDKSKSPTEAKRKHLSLTETKSQGGKSG), 593–667 (QFDD…SEQS), 809–838 (STVQKDHKEKEKQRQEQYLQEGQEQMSGMS), 868–976 (LQMK…RGLE), 1805–1837 (GGQSTSAQFPAPQAPPSPGQLPISRAPPTPGQP), and 1888–1907 (FQPPATAEQSPYLQAPSTPG). Basic and acidic residues predominate over residues 433 to 446 (DSTKDNVSLKKGDF). The segment covering 472–484 (SGPNLSDNKSGQK) has biased composition (polar residues). Positions 506–520 (MKSFSEDKSKSPTEA) are enriched in basic and acidic residues. A compositionally biased stretch (polar residues) spans 527–538 (LTETKSQGGKSG). A compositionally biased stretch (basic residues) spans 603–612 (GKIKGKKHHI). Composition is skewed to basic and acidic residues over residues 619–632 (SKEEKTEEKEELTK) and 812–823 (QKDHKEKEKQRQ). A coiled-coil region spans residues 812 to 860 (QKDHKEKEKQRQEQYLQEGQEQMSGMSLKQQLLGERNLLKEHYEKISEN). A compositionally biased stretch (polar residues) spans 824 to 838 (EQYLQEGQEQMSGMS). Composition is skewed to basic and acidic residues over residues 901-912 (AEQEEKQKQRGQ), 939-955 (LEKENGQMRQIQKEAKH), and 964-976 (KGKEKQKPERGLE). A compositionally biased stretch (pro residues) spans 1816 to 1835 (PQAPPSPGQLPISRAPPTPG). The span at 1894 to 1907 (AEQSPYLQAPSTPG) shows a compositional bias: polar residues.

Belongs to the FAM186 family.

In Homo sapiens (Human), this protein is Protein FAM186A (FAM186A).